The following is a 354-amino-acid chain: Eukaryotic translation initiation factor 3 subunit H (354 aa).

Positions 1–28 (MATRQPYQKKFQSRDQREQTSSQQAPNS) are disordered. A compositionally biased stretch (polar residues) spans 19–28 (QTSSQQAPNS). The MPN domain occupies 33-174 (VTVDALVVMK…LSAFRLSNKA (142 aa)).

The protein belongs to the eIF-3 subunit H family. As to quaternary structure, component of the eukaryotic translation initiation factor 3 (eIF-3) complex.

The protein localises to the cytoplasm. Its function is as follows. Component of the eukaryotic translation initiation factor 3 (eIF-3) complex, which is involved in protein synthesis of a specialized repertoire of mRNAs and, together with other initiation factors, stimulates binding of mRNA and methionyl-tRNAi to the 40S ribosome. The eIF-3 complex specifically targets and initiates translation of a subset of mRNAs involved in cell proliferation. This chain is Eukaryotic translation initiation factor 3 subunit H, found in Monosiga brevicollis (Choanoflagellate).